The primary structure comprises 149 residues: UPF0260 protein RCAP_rcc02083 (149 aa).

This sequence belongs to the UPF0260 family.

The sequence is that of UPF0260 protein RCAP_rcc02083 from Rhodobacter capsulatus (strain ATCC BAA-309 / NBRC 16581 / SB1003).